A 397-amino-acid polypeptide reads, in one-letter code: Tryptophan synthase beta chain (397 aa).

Lys87 carries the post-translational modification N6-(pyridoxal phosphate)lysine.

Belongs to the TrpB family. In terms of assembly, tetramer of two alpha and two beta chains. Pyridoxal 5'-phosphate is required as a cofactor.

It catalyses the reaction (1S,2R)-1-C-(indol-3-yl)glycerol 3-phosphate + L-serine = D-glyceraldehyde 3-phosphate + L-tryptophan + H2O. It participates in amino-acid biosynthesis; L-tryptophan biosynthesis; L-tryptophan from chorismate: step 5/5. Functionally, the beta subunit is responsible for the synthesis of L-tryptophan from indole and L-serine. The protein is Tryptophan synthase beta chain of Citrobacter koseri (strain ATCC BAA-895 / CDC 4225-83 / SGSC4696).